Here is a 645-residue protein sequence, read N- to C-terminus: Threonine--tRNA ligase (645 aa).

The region spanning 1 to 63 is the TGS domain; that stretch reads MEQINIQFPD…ETDGSIEIVT (63 aa). The tract at residues 242–540 is catalytic; the sequence is DHRKIGKELE…LTEETKGAFP (299 aa). Residues Cys336, His387, and His517 each contribute to the Zn(2+) site.

Belongs to the class-II aminoacyl-tRNA synthetase family. In terms of assembly, homodimer. The cofactor is Zn(2+).

It localises to the cytoplasm. It carries out the reaction tRNA(Thr) + L-threonine + ATP = L-threonyl-tRNA(Thr) + AMP + diphosphate + H(+). Its function is as follows. Catalyzes the attachment of threonine to tRNA(Thr) in a two-step reaction: L-threonine is first activated by ATP to form Thr-AMP and then transferred to the acceptor end of tRNA(Thr). Also edits incorrectly charged L-seryl-tRNA(Thr). This Staphylococcus aureus (strain JH1) protein is Threonine--tRNA ligase.